The primary structure comprises 592 residues: V-type ATP synthase alpha chain 2 (592 aa).

237 to 244 provides a ligand contact to ATP; that stretch reads GGFGTGKT.

This sequence belongs to the ATPase alpha/beta chains family.

It catalyses the reaction ATP + H2O + 4 H(+)(in) = ADP + phosphate + 5 H(+)(out). In terms of biological role, produces ATP from ADP in the presence of a proton gradient across the membrane. The V-type alpha chain is a catalytic subunit. The polypeptide is V-type ATP synthase alpha chain 2 (Clostridium tetani (strain Massachusetts / E88)).